The primary structure comprises 546 residues: EH domain-containing protein 2 (546 aa).

EF-hand domains follow at residues 15–50 (EHQK…SKLS) and 51–84 (RQEL…VSLA). Residues 16 to 94 (HQKIYKEWFN…QEGHEITSDL (79 aa)) form the EH domain. 7 residues coordinate Ca(2+): D28, D30, D32, R34, D39, D62, and E73. In terms of domain architecture, Dynamin-type G spans 194 to 430 (FDAKPMVMLL…LLADLMDVPK (237 aa)). The segment at 204-211 (GQYSTGKT) is G1 motif. Residue 204 to 211 (GQYSTGKT) coordinates GTP. The segment at 230–231 (EP) is G2 motif. The segment at 292 to 295 (DTPG) is G3 motif. Residues 292–296 (DTPGV) and K359 each bind GTP. The G4 motif stretch occupies residues 358-361 (NKAD). V382 is a region of interest (G5 motif). 395 to 398 (SFND) provides a ligand contact to GTP. The Nuclear localization signal motif lies at 429-436 (PKKACDRK). Residues 467–490 (KSKAQQRLMDNLEEEFGKVQREFH) adopt a coiled-coil conformation.

It belongs to the TRAFAC class dynamin-like GTPase superfamily. Dynamin/Fzo/YdjA family. EHD subfamily. As to quaternary structure, homooligomer, and heterooligomer with EHD1. Interacts with AP-4 complex subunit sigma (At2g19790).

It localises to the endosome membrane. The protein localises to the cell membrane. It is found in the nucleus. The protein resides in the cytoplasm. It carries out the reaction GTP + H2O = GDP + phosphate + H(+). Involved in endocytosis negative regulation, probably by influencing actin organization. Acts in early endocytic membrane fusion and membrane trafficking of recycling endosomes. Exhibits an inhibitory effect on endocytosis when over-expressed. The sequence is that of EH domain-containing protein 2 from Arabidopsis thaliana (Mouse-ear cress).